We begin with the raw amino-acid sequence, 89 residues long: Small ribosomal subunit protein uS15 (89 aa).

The protein belongs to the universal ribosomal protein uS15 family. In terms of assembly, part of the 30S ribosomal subunit. Forms a bridge to the 50S subunit in the 70S ribosome, contacting the 23S rRNA.

One of the primary rRNA binding proteins, it binds directly to 16S rRNA where it helps nucleate assembly of the platform of the 30S subunit by binding and bridging several RNA helices of the 16S rRNA. Its function is as follows. Forms an intersubunit bridge (bridge B4) with the 23S rRNA of the 50S subunit in the ribosome. The polypeptide is Small ribosomal subunit protein uS15 (Solibacter usitatus (strain Ellin6076)).